Reading from the N-terminus, the 455-residue chain is Argininosuccinate lyase (455 aa).

It belongs to the lyase 1 family. Argininosuccinate lyase subfamily.

Its subcellular location is the cytoplasm. It catalyses the reaction 2-(N(omega)-L-arginino)succinate = fumarate + L-arginine. It participates in amino-acid biosynthesis; L-arginine biosynthesis; L-arginine from L-ornithine and carbamoyl phosphate: step 3/3. The protein is Argininosuccinate lyase of Shewanella denitrificans (strain OS217 / ATCC BAA-1090 / DSM 15013).